The sequence spans 93 residues: Acylphosphatase (93 aa).

The 87-residue stretch at 6 to 92 folds into the Acylphosphatase-like domain; that stretch reads RAHVWVGGKV…EGLTHFEVLR (87 aa). Active-site residues include arginine 21 and asparagine 39.

The protein belongs to the acylphosphatase family.

It carries out the reaction an acyl phosphate + H2O = a carboxylate + phosphate + H(+). This is Acylphosphatase (acyP) from Gloeobacter violaceus (strain ATCC 29082 / PCC 7421).